Reading from the N-terminus, the 132-residue chain is Ribosome-binding factor A (132 aa).

It belongs to the RbfA family. In terms of assembly, monomer. Binds 30S ribosomal subunits, but not 50S ribosomal subunits or 70S ribosomes.

It localises to the cytoplasm. Functionally, one of several proteins that assist in the late maturation steps of the functional core of the 30S ribosomal subunit. Associates with free 30S ribosomal subunits (but not with 30S subunits that are part of 70S ribosomes or polysomes). Required for efficient processing of 16S rRNA. May interact with the 5'-terminal helix region of 16S rRNA. The sequence is that of Ribosome-binding factor A from Rhizorhabdus wittichii (strain DSM 6014 / CCUG 31198 / JCM 15750 / NBRC 105917 / EY 4224 / RW1) (Sphingomonas wittichii).